A 389-amino-acid chain; its full sequence is Leucine aminopeptidase 1 (389 aa).

An N-terminal signal peptide occupies residues 1 to 18 (MKSAALLLPLYAAAFAAA). Positions 19–89 (AFHHEHAQAV…TLKRRINAAS (71 aa)) are excised as a propeptide. The N-linked (GlcNAc...) asparagine glycan is linked to asparagine 99. 4 residues coordinate Zn(2+): histidine 188, aspartate 207, glutamate 246, and aspartate 273. Residues cysteine 322 and cysteine 326 are joined by a disulfide bond. Zn(2+) is bound at residue histidine 355.

It belongs to the peptidase M28 family. M28E subfamily. Monomer. The cofactor is Zn(2+).

The protein localises to the secreted. Functionally, extracellular aminopeptidase that allows assimilation of proteinaceous substrates. This is Leucine aminopeptidase 1 (lap1) from Pyrenophora teres f. teres (strain 0-1) (Barley net blotch fungus).